We begin with the raw amino-acid sequence, 263 residues long: MKSSMAMIKHKKELVEYARHLKLPNLAEHVGVILHEAQEKQLTYSEFLANCLAREIQGRERKSYLTRLKLSGLPAKYDLDLYDYDRAEGMDNRRLRELRELVWVNQAYNLLLVGPSGTGKTFIAAGLVYEAVKAGYEAYLMTLEELLTCLKTKEVSAHAMKTYKRIMKARLLAIDDATLFPLKREEAVLLFKLVNDFQERTSLIITANKALTRWLETLEDEAVTAALLDRLLYCCEIIRLGGTSYRMQNRKTIFSNQNTDIGT.

Gly114–Thr121 serves as a coordination point for ATP.

This sequence belongs to the IS21/IS1162 putative ATP-binding protein family.

In Bacteroides fragilis, this protein is Insertion sequence IS21-like putative ATP-binding protein (tnpB).